We begin with the raw amino-acid sequence, 424 residues long: Histidine--tRNA ligase (424 aa).

It belongs to the class-II aminoacyl-tRNA synthetase family. As to quaternary structure, homodimer.

The protein localises to the cytoplasm. It catalyses the reaction tRNA(His) + L-histidine + ATP = L-histidyl-tRNA(His) + AMP + diphosphate + H(+). This Bacillus velezensis (strain DSM 23117 / BGSC 10A6 / LMG 26770 / FZB42) (Bacillus amyloliquefaciens subsp. plantarum) protein is Histidine--tRNA ligase.